Consider the following 690-residue polypeptide: Elongation factor G (690 aa).

Residues 8 to 283 (ERYRNFGIMA…AVVDFMPSPL (276 aa)) form the tr-type G domain. GTP contacts are provided by residues 17–24 (AHIDAGKT), 81–85 (DTPGH), and 135–138 (NKLD).

It belongs to the TRAFAC class translation factor GTPase superfamily. Classic translation factor GTPase family. EF-G/EF-2 subfamily.

The protein localises to the cytoplasm. Functionally, catalyzes the GTP-dependent ribosomal translocation step during translation elongation. During this step, the ribosome changes from the pre-translocational (PRE) to the post-translocational (POST) state as the newly formed A-site-bound peptidyl-tRNA and P-site-bound deacylated tRNA move to the P and E sites, respectively. Catalyzes the coordinated movement of the two tRNA molecules, the mRNA and conformational changes in the ribosome. The sequence is that of Elongation factor G from Novosphingobium aromaticivorans (strain ATCC 700278 / DSM 12444 / CCUG 56034 / CIP 105152 / NBRC 16084 / F199).